The primary structure comprises 316 residues: UPF0725 protein At1g02770 (316 aa).

This sequence belongs to the UPF0725 (EMB2204) family.

The sequence is that of UPF0725 protein At1g02770 from Arabidopsis thaliana (Mouse-ear cress).